We begin with the raw amino-acid sequence, 980 residues long: Zinc finger BED domain-containing protein 6 (980 aa).

A required for nucleolar localization region spans residues Met1–Leu89. Residues Leu89–Gln109 are disordered. The segment at Ala130–Ala187 adopts a BED-type 1 zinc-finger fold. Positions 151, 154, 175, and 180 each coordinate Zn(2+). Positions Leu201–Asp239 are disordered. A compositionally biased stretch (low complexity) spans Leu203–Ser215. The BED-type 2 zinc-finger motif lies at Ala265–Ala322. Residues Cys286, Cys289, His310, and His315 each contribute to the Zn(2+) site. A disordered region spans residues Ala328 to Gln397. Acidic residues predominate over residues Thr360–Pro373. Ser383 carries the phosphoserine modification. The tract at residues Val868–Leu950 is HATC (Hobo-Ac-Tam3) domain.

In terms of tissue distribution, expressed in pancreatic islet cells and weakly expressed in surrounding exocrine tissues (at protein level). Expressed in muscle and brain (at protein level). Shows broad tissue distribution with expression detected in brain, stomach, intestine, heart, kidney, liver, lung, skeletal muscle, ovary, spleen, tail and testis.

The protein resides in the nucleus. It localises to the nucleolus. Its subcellular location is the cytoplasm. Its function is as follows. Transcriptional repressor which binds to the consensus sequence 5'-GCTCGC-3', transcription regulation may be tissue-specific. Regulates the expression of target genes such as: IGF2, PGAP6/TMEM8, ENHO, and PIANP. Acts as a transcriptional repressor of growth factor IGF2, thereby negatively regulating postnatal growth of muscles and internal organs, especially in females. Negatively regulates myoblast differentiation and myoblast mitochondrial activity via its regulation of IGF2 transcription. Negatively regulates the cell cycle of myoblasts, potentially via transcriptional regulation of the E2F family of transcription factors such as: E2F1 and E2F2. Positively regulates the cell cycle and survival of pancreatic beta cells. Binds to the CDH2 gene and may directly repress CDH2 transcription. Probably by controlling CDH2 expression, regulates pancreatic beta cell adhesion, and formation of cell-to-cell junctions between pancreatic beta cells and neural crest stem cells. May also play a role in embryonic beta cell differentiation. May play a role in insulin sensitivity and glucose clearance. The protein is Zinc finger BED domain-containing protein 6 of Mus musculus (Mouse).